The chain runs to 257 residues: Phosphomannomutase (257 aa).

The active-site Nucleophile is the aspartate 19. Aspartate 19 and aspartate 21 together coordinate Mg(2+). Residue aspartate 21 is the Proton donor/acceptor of the active site. Positions 28, 133, 144, 151, 189, and 191 each coordinate alpha-D-mannose 1-phosphate. Residues aspartate 219, phenylalanine 231, aspartate 233, and threonine 236 each coordinate Mg(2+).

This sequence belongs to the eukaryotic PMM family. As to quaternary structure, homodimer.

It localises to the cytoplasm. The enzyme catalyses alpha-D-mannose 1-phosphate = D-mannose 6-phosphate. It functions in the pathway nucleotide-sugar biosynthesis; GDP-alpha-D-mannose biosynthesis; alpha-D-mannose 1-phosphate from D-fructose 6-phosphate: step 2/2. Involved in the synthesis of the GDP-mannose and dolichol-phosphate-mannose required for a number of critical mannosyl transfer reactions. This is Phosphomannomutase (pmm1) from Schizosaccharomyces pombe (strain 972 / ATCC 24843) (Fission yeast).